The sequence spans 817 residues: Fibroblast growth factor receptor 2 (817 aa).

An N-terminal signal peptide occupies residues 1–22 (MFARGWLLGALLLMTLATVSVA). The Extracellular segment spans residues 23–377 (RPSLKIDLVN…ETDYPPDYVE (355 aa)). 3 consecutive Ig-like C2-type domains span residues 26 to 126 (LKID…VNVT), 159 to 247 (PEKM…YTLD), and 256 to 358 (PILQ…AWLT). 3 N-linked (GlcNAc...) asparagine glycosylation sites follow: Asn32, Asn84, and Asn124. Residues Cys63 and Cys108 are joined by a disulfide bond. A heparin-binding region spans residues 161–178 (KMEKKLHAVPAANTVKFR). A disulfide bridge connects residues Cys179 and Cys231. Residues Asn228, Asn265, Asn297, Asn318, and Asn331 are each glycosylated (N-linked (GlcNAc...) asparagine). The cysteines at positions 278 and 342 are disulfide-linked. Residues 378–398 (IAIYCIGVFLIACMVVIVVVC) traverse the membrane as a helical segment. Topologically, residues 399 to 817 (RMRTSAKKPD…YQHINGGIKT (419 aa)) are cytoplasmic. The disordered stretch occupies residues 429–465 (TVSSDSSSSMSSSTPLVRITTRRSSAHDDPIPEYDLP). Low complexity predominate over residues 431–441 (SSDSSSSMSSS). Tyr462 is modified (phosphotyrosine; by autocatalysis). Residues 477 to 766 (LTLGKPLGEG…LTLATNEEYL (290 aa)) enclose the Protein kinase domain. ATP is bound by residues 483-491 (LGEGCFGQV), Lys513, 561-563 (EYA), and Asn567. Tyr582 carries the phosphotyrosine; by autocatalysis modification. Asp622 serves as the catalytic Proton acceptor. Tyr652, Tyr653, and Tyr765 each carry phosphotyrosine; by autocatalysis.

Belongs to the protein kinase superfamily. Tyr protein kinase family. Fibroblast growth factor receptor subfamily. Monomer. Homodimer after ligand binding. In terms of processing, autophosphorylated. Binding of FGF family members together with heparan sulfate proteoglycan or heparin promotes receptor dimerization and autophosphorylation on tyrosine residues. Autophosphorylation occurs in trans between the two FGFR molecules present in the dimer. Post-translationally, N-glycosylated in the endoplasmic reticulum. The N-glycan chains undergo further maturation to an Endo H-resistant form in the Golgi apparatus. Ubiquitinated. FGFR2 is rapidly ubiquitinated after autophosphorylation, leading to internalization and degradation. Subject to degradation both in lysosomes and by the proteasome.

It is found in the cell membrane. The protein localises to the golgi apparatus. Its subcellular location is the cytoplasmic vesicle. The catalysed reaction is L-tyrosyl-[protein] + ATP = O-phospho-L-tyrosyl-[protein] + ADP + H(+). Its activity is regulated as follows. Present in an inactive conformation in the absence of bound ligand. Ligand binding leads to dimerization and activation by autophosphorylation on tyrosine residues. Functionally, tyrosine-protein kinase that acts as a cell-surface receptor for fibroblast growth factors and plays an essential role in the regulation of cell proliferation, differentiation, migration and apoptosis, and in the regulation of embryonic development. Required for normal embryonic patterning, limb bud development, lung morphogenesis, osteogenesis and skin development. Plays an essential role in the regulation of osteoblast differentiation, proliferation and apoptosis, and is required for normal skeleton development. Promotes cell proliferation in keratinocytes and immature osteoblasts, but promotes apoptosis in differentiated osteoblasts. Phosphorylates PLCG1, FRS2 and PAK4. Ligand binding leads to the activation of several signaling cascades. Activation of PLCG1 leads to the production of the cellular signaling molecules diacylglycerol and inositol 1,4,5-trisphosphate. Phosphorylation of FRS2 triggers recruitment of GRB2, GAB1, PIK3R1 and SOS1, and mediates activation of RAS, MAPK1/ERK2, MAPK3/ERK1 and the MAP kinase signaling pathway, as well as of the AKT1 signaling pathway. FGFR2 signaling is down-regulated by ubiquitination, internalization and degradation. Mutations that lead to constitutive kinase activation or impair normal FGFR2 maturation, internalization and degradation lead to aberrant signaling. Over-expressed FGFR2 promotes activation of STAT1. This Danio rerio (Zebrafish) protein is Fibroblast growth factor receptor 2 (fgfr2).